A 584-amino-acid chain; its full sequence is Proline--tRNA ligase (584 aa).

The segment at 242 to 261 (APPASNPEERPATQVHDTPD) is disordered.

Belongs to the class-II aminoacyl-tRNA synthetase family. ProS type 1 subfamily. Homodimer.

The protein resides in the cytoplasm. It catalyses the reaction tRNA(Pro) + L-proline + ATP = L-prolyl-tRNA(Pro) + AMP + diphosphate. Catalyzes the attachment of proline to tRNA(Pro) in a two-step reaction: proline is first activated by ATP to form Pro-AMP and then transferred to the acceptor end of tRNA(Pro). As ProRS can inadvertently accommodate and process non-cognate amino acids such as alanine and cysteine, to avoid such errors it has two additional distinct editing activities against alanine. One activity is designated as 'pretransfer' editing and involves the tRNA(Pro)-independent hydrolysis of activated Ala-AMP. The other activity is designated 'posttransfer' editing and involves deacylation of mischarged Ala-tRNA(Pro). The misacylated Cys-tRNA(Pro) is not edited by ProRS. This chain is Proline--tRNA ligase, found in Salinispora arenicola (strain CNS-205).